We begin with the raw amino-acid sequence, 218 residues long: Small ribosomal subunit protein uS3c (218 aa).

Residues isoleucine 47–alanine 118 form the KH type-2 domain.

This sequence belongs to the universal ribosomal protein uS3 family. As to quaternary structure, part of the 30S ribosomal subunit.

The protein localises to the plastid. Its subcellular location is the chloroplast. The chain is Small ribosomal subunit protein uS3c (rps3) from Cycas taitungensis (Prince sago).